A 72-amino-acid chain; its full sequence is Translation initiation factor IF-1 (72 aa).

An S1-like domain is found at 1–72; it reads MSKEDSIEVT…TKGRITFRHR (72 aa).

The protein belongs to the IF-1 family. Component of the 30S ribosomal translation pre-initiation complex which assembles on the 30S ribosome in the order IF-2 and IF-3, IF-1 and N-formylmethionyl-tRNA(fMet); mRNA recruitment can occur at any time during PIC assembly.

Its subcellular location is the cytoplasm. In terms of biological role, one of the essential components for the initiation of protein synthesis. Stabilizes the binding of IF-2 and IF-3 on the 30S subunit to which N-formylmethionyl-tRNA(fMet) subsequently binds. Helps modulate mRNA selection, yielding the 30S pre-initiation complex (PIC). Upon addition of the 50S ribosomal subunit IF-1, IF-2 and IF-3 are released leaving the mature 70S translation initiation complex. This is Translation initiation factor IF-1 from Solibacter usitatus (strain Ellin6076).